The chain runs to 288 residues: 4-diphosphocytidyl-2-C-methyl-D-erythritol kinase (288 aa).

Lys-11 is a catalytic residue. 95-105 (PVAAGMAGGSS) contacts ATP. Asp-137 is a catalytic residue.

It belongs to the GHMP kinase family. IspE subfamily.

It catalyses the reaction 4-CDP-2-C-methyl-D-erythritol + ATP = 4-CDP-2-C-methyl-D-erythritol 2-phosphate + ADP + H(+). It functions in the pathway isoprenoid biosynthesis; isopentenyl diphosphate biosynthesis via DXP pathway; isopentenyl diphosphate from 1-deoxy-D-xylulose 5-phosphate: step 3/6. Its function is as follows. Catalyzes the phosphorylation of the position 2 hydroxy group of 4-diphosphocytidyl-2C-methyl-D-erythritol. This chain is 4-diphosphocytidyl-2-C-methyl-D-erythritol kinase, found in Lachnospira eligens (strain ATCC 27750 / DSM 3376 / VPI C15-48 / C15-B4) (Eubacterium eligens).